We begin with the raw amino-acid sequence, 293 residues long: MAIISEMEEARPSMVPFTASFDPSNPIAFLEKVLDVIGKESNFLKKDTAEKEIVAAVMAAKQRLREAEKKKLEKESVKSMEVEKPKKDSLKPTELEKPKEESLMATDPMEIEKPKEEKESGPIVPNKGNGLDFEKYSWGQNLQEVTINIPMPEGTKSRSVTCEIKKNRLKVGLKGQDLIVDGEFFNSVKPDDCFWNIEDQKMISVLLTKQDQMEWWKYCVKGEPEIDTQKVEPETSKLGDLDPETRASVEKMMFDQRQKQMGLPRSDEIEKKDMLKKFMAQNPGMDFSNAKFN.

Ala-2 is subject to N-acetylalanine. Residues 50–80 are a coiled coil; that stretch reads EKEIVAAVMAAKQRLREAEKKKLEKESVKSM. Basic and acidic residues-rich tracts occupy residues 67 to 102 and 110 to 120; these read AEKK…KEES and EIEKPKEEKES. The segment at 67–125 is disordered; it reads AEKKKLEKESVKSMEVEKPKKDSLKPTELEKPKEESLMATDPMEIEKPKEEKESGPIVP. The region spanning 131 to 220 is the CS domain; the sequence is LDFEKYSWGQ…DQMEWWKYCV (90 aa).

Its subcellular location is the cytoplasm. The protein localises to the cytoplasmic granule. Small heat shock protein required for the establishment of auxin gradients and for patterning of the apical domain of the embryo. Involved in the specification of the cotyledon primordia. Also required for normal inflorescence and floral meristem function, normal developmental patterning and thermotolerance. Acts as a molecular chaperone. The sequence is that of Protein BOBBER 2 (BOB2) from Arabidopsis thaliana (Mouse-ear cress).